Consider the following 233-residue polypeptide: Methylthioribulose-1-phosphate dehydratase (233 aa).

Cys91 contacts substrate. His108 and His110 together coordinate Zn(2+). Glu137 acts as the Proton donor/acceptor in catalysis. His194 serves as a coordination point for Zn(2+).

The protein belongs to the aldolase class II family. MtnB subfamily. Zn(2+) serves as cofactor.

The protein resides in the cytoplasm. The enzyme catalyses 5-(methylsulfanyl)-D-ribulose 1-phosphate = 5-methylsulfanyl-2,3-dioxopentyl phosphate + H2O. Its pathway is amino-acid biosynthesis; L-methionine biosynthesis via salvage pathway; L-methionine from S-methyl-5-thio-alpha-D-ribose 1-phosphate: step 2/6. In terms of biological role, catalyzes the dehydration of methylthioribulose-1-phosphate (MTRu-1-P) into 2,3-diketo-5-methylthiopentyl-1-phosphate (DK-MTP-1-P). The sequence is that of Methylthioribulose-1-phosphate dehydratase from Phaeosphaeria nodorum (strain SN15 / ATCC MYA-4574 / FGSC 10173) (Glume blotch fungus).